Consider the following 255-residue polypeptide: Alkaline ceramidase (255 aa).

At Met-1–Tyr-28 the chain is on the lumenal side. Residues Ile-29–Leu-49 traverse the membrane as a helical segment. Over Val-50 to Arg-60 the chain is Cytoplasmic. Residues Phe-61–Thr-81 traverse the membrane as a helical segment. His-79 lines the Zn(2+) pocket. The Lumenal portion of the chain corresponds to Leu-82 to Glu-91. A helical membrane pass occupies residues Thr-92–Tyr-112. Over Arg-113–Thr-118 the chain is Cytoplasmic. A run of 2 helical transmembrane segments spans residues Phe-119–Gly-139 and Phe-140–Ile-160. The Cytoplasmic portion of the chain corresponds to His-161 to Arg-169. A helical transmembrane segment spans residues Ile-170–Cys-192. The Lumenal segment spans residues Lys-193–His-205. Zn(2+) contacts are provided by His-205 and His-209. The chain crosses the membrane as a helical span at residues Ala-206 to Cys-226. Residues Arg-227–Gln-255 lie on the Cytoplasmic side of the membrane.

This sequence belongs to the alkaline ceramidase family. The cofactor is Zn(2+). In terms of tissue distribution, mostly expressed in roots, shoot meristems and pollen, and, to a lower extent, in mature leaves.

It localises to the endoplasmic reticulum membrane. The protein localises to the golgi apparatus membrane. Hydrolyzes only phytoceramide into phytosphingosine and free fatty acid. Does not have reverse activity. Affects plant morphogenesis. Required for the formation of wax layer that ensure cuticle permeability. Implicated in abscisic acid (ABA)-mediated stomatal closure. Involved in both biotic and abiotic stresses. Promotes salt resistance and defenses responses toward pathogenic bacteria (e.g. P.syringae) and against the fungal toxin fumonisin B1 (FB1). The polypeptide is Alkaline ceramidase (Arabidopsis thaliana (Mouse-ear cress)).